Consider the following 682-residue polypeptide: Potassium-transporting ATPase ATP-binding subunit (682 aa).

4 helical membrane passes run 34–54 (PVMF…IAMA), 62–82 (ALFS…ANFA), 219–239 (IALT…TATL), and 254–274 (VLVA…LSAI). Aspartate 307 serves as the catalytic 4-aspartylphosphate intermediate. ATP is bound by residues aspartate 344, glutamate 348, 377–384 (FTAQSRMS), and lysine 395. Aspartate 518 and aspartate 522 together coordinate Mg(2+). Transmembrane regions (helical) follow at residues 588–608 (FAII…LNIM), 616–636 (AILS…PLAL), and 656–676 (IYGL…DLLL).

This sequence belongs to the cation transport ATPase (P-type) (TC 3.A.3) family. Type IA subfamily. As to quaternary structure, the system is composed of three essential subunits: KdpA, KdpB and KdpC.

The protein resides in the cell inner membrane. The enzyme catalyses K(+)(out) + ATP + H2O = K(+)(in) + ADP + phosphate + H(+). Its function is as follows. Part of the high-affinity ATP-driven potassium transport (or Kdp) system, which catalyzes the hydrolysis of ATP coupled with the electrogenic transport of potassium into the cytoplasm. This subunit is responsible for energy coupling to the transport system and for the release of the potassium ions to the cytoplasm. This Escherichia coli (strain UTI89 / UPEC) protein is Potassium-transporting ATPase ATP-binding subunit.